A 70-amino-acid polypeptide reads, in one-letter code: Protein SlyX homolog (70 aa).

It belongs to the SlyX family.

The polypeptide is Protein SlyX homolog (Shewanella oneidensis (strain ATCC 700550 / JCM 31522 / CIP 106686 / LMG 19005 / NCIMB 14063 / MR-1)).